Here is a 198-residue protein sequence, read N- to C-terminus: B9 domain-containing protein 1 (198 aa).

In terms of domain architecture, C2 B9-type spans 8-126; the sequence is FLLNVSGQIE…TIPMFVPESS (119 aa).

It belongs to the B9D family. In terms of assembly, part of the tectonic-like complex (also named B9 complex).

It localises to the cytoplasm. It is found in the cytoskeleton. Its subcellular location is the cilium basal body. In terms of biological role, component of the tectonic-like complex, a complex localized at the transition zone of primary cilia and acting as a barrier that prevents diffusion of transmembrane proteins between the cilia and plasma membranes. Required for ciliogenesis and sonic hedgehog/SHH signaling. The polypeptide is B9 domain-containing protein 1 (b9d1) (Xenopus laevis (African clawed frog)).